The chain runs to 236 residues: tRNA (guanine-N(7)-)-methyltransferase (236 aa).

Asp-35, Glu-60, Asn-87, and Asp-113 together coordinate S-adenosyl-L-methionine. Asp-113 is an active-site residue. The substrate site is built by Lys-117 and Asp-149. Residues 217-236 (EFEQHWQEIDNPGNAPTPDA) are disordered.

Belongs to the class I-like SAM-binding methyltransferase superfamily. TrmB family.

The enzyme catalyses guanosine(46) in tRNA + S-adenosyl-L-methionine = N(7)-methylguanosine(46) in tRNA + S-adenosyl-L-homocysteine. Its pathway is tRNA modification; N(7)-methylguanine-tRNA biosynthesis. Functionally, catalyzes the formation of N(7)-methylguanine at position 46 (m7G46) in tRNA. This chain is tRNA (guanine-N(7)-)-methyltransferase, found in Synechococcus sp. (strain CC9902).